A 310-amino-acid chain; its full sequence is Vomeronasal type-1 receptor 93 (310 aa).

Topologically, residues M1–E20 are extracellular. Residues V21–G41 form a helical membrane-spanning segment. At E42–Q59 the chain is on the cytoplasmic side. A helical membrane pass occupies residues L60–W80. The Extracellular portion of the chain corresponds to D81–R93. A disulfide bridge connects residues C85 and C172. Residues L94 to L114 form a helical membrane-spanning segment. The Cytoplasmic segment spans residues S115 to G134. The helical transmembrane segment at A135–I155 threads the bilayer. At A156–E193 the chain is on the extracellular side. N159 is a glycosylation site (N-linked (GlcNAc...) asparagine). Residues A194–H214 traverse the membrane as a helical segment. Over R215–E238 the chain is Cytoplasmic. The helical transmembrane segment at T239–Y259 threads the bilayer. The Extracellular portion of the chain corresponds to S260–T269. Residues F270–I290 form a helical membrane-spanning segment. The Cytoplasmic portion of the chain corresponds to F291–I310.

It belongs to the G-protein coupled receptor 1 family. As to expression, expressed in 1-4% of neurons of the vomeronasal organ. Only one pheromone receptor gene may be expressed in a particular neuron. Not expressed in the main olfactory epithelium.

Its subcellular location is the cell membrane. Its function is as follows. Putative pheromone receptor implicated in the regulation of social as well as reproductive behavior. The sequence is that of Vomeronasal type-1 receptor 93 (Vom1r93) from Rattus norvegicus (Rat).